Consider the following 546-residue polypeptide: uncharacterized protein (546 aa).

3 disordered regions span residues 37–101 (KEND…NQKL), 269–300 (QNKA…QPEV), and 392–443 (LSDL…TSAC). Basic and acidic residues-rich tracts occupy residues 81–93 (DDVK…ENNQ) and 274–283 (ADLRKTESHG). The segment covering 284–298 (THSQSTPPQHSSSQP) has biased composition (low complexity).

This is an uncharacterized protein from Homo sapiens (Human).